Here is a 145-residue protein sequence, read N- to C-terminus: D-aminoacyl-tRNA deacylase (145 aa).

Positions 137-138 (GP) match the Gly-cisPro motif, important for rejection of L-amino acids motif.

Belongs to the DTD family. In terms of assembly, homodimer.

The protein resides in the cytoplasm. It catalyses the reaction glycyl-tRNA(Ala) + H2O = tRNA(Ala) + glycine + H(+). The catalysed reaction is a D-aminoacyl-tRNA + H2O = a tRNA + a D-alpha-amino acid + H(+). Its function is as follows. An aminoacyl-tRNA editing enzyme that deacylates mischarged D-aminoacyl-tRNAs. Also deacylates mischarged glycyl-tRNA(Ala), protecting cells against glycine mischarging by AlaRS. Acts via tRNA-based rather than protein-based catalysis; rejects L-amino acids rather than detecting D-amino acids in the active site. By recycling D-aminoacyl-tRNA to D-amino acids and free tRNA molecules, this enzyme counteracts the toxicity associated with the formation of D-aminoacyl-tRNA entities in vivo and helps enforce protein L-homochirality. The protein is D-aminoacyl-tRNA deacylase of Salmonella enteritidis PT4 (strain P125109).